We begin with the raw amino-acid sequence, 22 residues long: Phospholipase A2 (22 aa).

Belongs to the phospholipase A2 family. The cofactor is Ca(2+).

It is found in the secreted. It catalyses the reaction a 1,2-diacyl-sn-glycero-3-phosphocholine + H2O = a 1-acyl-sn-glycero-3-phosphocholine + a fatty acid + H(+). Its function is as follows. PA2 catalyzes the calcium-dependent hydrolysis of the 2-acyl groups in 3-sn-phosphoglycerides. The sequence is that of Phospholipase A2 from Struthio camelus (Common ostrich).